The primary structure comprises 284 residues: Phosphatidylglycerol--prolipoprotein diacylglyceryl transferase (284 aa).

The next 7 membrane-spanning stretches (helical) occupy residues 21 to 41, 62 to 82, 106 to 126, 136 to 156, 190 to 210, 218 to 238, and 252 to 272; these read IEVH…FYMA, YFLW…ILIY, FVGI…IASY, LLIY…FGRI, PSQL…VMWA, GLLI…AEFY, and LSMG…ILLY. Arginine 155 provides a ligand contact to a 1,2-diacyl-sn-glycero-3-phospho-(1'-sn-glycerol).

It belongs to the Lgt family.

It is found in the cell inner membrane. The catalysed reaction is L-cysteinyl-[prolipoprotein] + a 1,2-diacyl-sn-glycero-3-phospho-(1'-sn-glycerol) = an S-1,2-diacyl-sn-glyceryl-L-cysteinyl-[prolipoprotein] + sn-glycerol 1-phosphate + H(+). Its pathway is protein modification; lipoprotein biosynthesis (diacylglyceryl transfer). Functionally, catalyzes the transfer of the diacylglyceryl group from phosphatidylglycerol to the sulfhydryl group of the N-terminal cysteine of a prolipoprotein, the first step in the formation of mature lipoproteins. This Helicobacter pylori (strain P12) protein is Phosphatidylglycerol--prolipoprotein diacylglyceryl transferase.